Reading from the N-terminus, the 310-residue chain is Putative S-adenosyl-L-methionine-dependent methyltransferase MUL_4763 (310 aa).

Residues Asp137 and 166–167 (DL) each bind S-adenosyl-L-methionine.

It belongs to the UPF0677 family.

Its function is as follows. Exhibits S-adenosyl-L-methionine-dependent methyltransferase activity. The sequence is that of Putative S-adenosyl-L-methionine-dependent methyltransferase MUL_4763 from Mycobacterium ulcerans (strain Agy99).